The following is a 124-amino-acid chain: MKKLFTVVGSIFSGLGIWLKSIDQSFYLTKVLYNGKVIEIVLTPETNEVVKSSNGVMNASVTSLPSTILYQAQSVPSINGGTLSVINTTVQPPWYANLWPEVLTIGIVMLGIAIFSWIKLKFRR.

In terms of biological role, this protein may be involved in virus assembly. This is an uncharacterized protein from Sulfolobus spindle-shape virus 1 (SSV1).